The chain runs to 88 residues: Small ribosomal subunit protein bS20 (88 aa).

Belongs to the bacterial ribosomal protein bS20 family.

In terms of biological role, binds directly to 16S ribosomal RNA. The polypeptide is Small ribosomal subunit protein bS20 (Micrococcus luteus (strain ATCC 4698 / DSM 20030 / JCM 1464 / CCM 169 / CCUG 5858 / IAM 1056 / NBRC 3333 / NCIMB 9278 / NCTC 2665 / VKM Ac-2230) (Micrococcus lysodeikticus)).